Consider the following 435-residue polypeptide: Cytochrome c oxidase subunit 3 (435 aa).

Transmembrane regions (helical) follow at residues valine 70–isoleucine 90, leucine 96–phenylalanine 116, leucine 132–tryptophan 152, valine 176–isoleucine 196, leucine 325–phenylalanine 345, phenylalanine 360–isoleucine 380, and leucine 412–tryptophan 432.

It belongs to the cytochrome c oxidase subunit 3 family. Component of the cytochrome c oxidase (complex IV, CIV), a multisubunit enzyme composed of a catalytic core of 3 subunits and several supernumerary subunits. The complex exists as a monomer or a dimer and forms supercomplexes (SCs) in the inner mitochondrial membrane with ubiquinol-cytochrome c oxidoreductase (cytochrome b-c1 complex, complex III, CIII).

Its subcellular location is the mitochondrion inner membrane. It catalyses the reaction 4 Fe(II)-[cytochrome c] + O2 + 8 H(+)(in) = 4 Fe(III)-[cytochrome c] + 2 H2O + 4 H(+)(out). Functionally, component of the cytochrome c oxidase, the last enzyme in the mitochondrial electron transport chain which drives oxidative phosphorylation. The respiratory chain contains 3 multisubunit complexes succinate dehydrogenase (complex II, CII), ubiquinol-cytochrome c oxidoreductase (cytochrome b-c1 complex, complex III, CIII) and cytochrome c oxidase (complex IV, CIV), that cooperate to transfer electrons derived from NADH and succinate to molecular oxygen, creating an electrochemical gradient over the inner membrane that drives transmembrane transport and the ATP synthase. Cytochrome c oxidase is the component of the respiratory chain that catalyzes the reduction of oxygen to water. Electrons originating from reduced cytochrome c in the intermembrane space (IMS) are transferred via the dinuclear copper A center (CU(A)) of subunit 2 and heme A of subunit 1 to the active site in subunit 1, a binuclear center (BNC) formed by heme A3 and copper B (CU(B)). The BNC reduces molecular oxygen to 2 water molecules using 4 electrons from cytochrome c in the IMS and 4 protons from the mitochondrial matrix. The polypeptide is Cytochrome c oxidase subunit 3 (cox3) (Dictyostelium discoideum (Social amoeba)).